A 379-amino-acid polypeptide reads, in one-letter code: Inactive deoxyhypusine synthase (379 aa).

Residues 1 to 48 are disordered; that stretch reads MLASVPAPRPAKKDSAASRRKSASKSTGAAVKDGSSARVSASGAAESP. The segment covering 36–47 has biased composition (low complexity); that stretch reads SARVSASGAAES. NAD(+) is bound by residues 115-119, 141-143, E147, and D256; these read SNMIS and SAG. 146 to 147 contacts spermidine; sequence EE. D261 contacts spermidine. G302 serves as a coordination point for NAD(+). Residue H307 coordinates spermidine. 323-324 is a binding site for NAD(+); the sequence is TG. Spermidine contacts are provided by residues 329 to 331 and 338 to 344; these read GCV and DDVACGL. 357–358 contributes to the NAD(+) binding site; sequence DA.

Belongs to the deoxyhypusine synthase family.

In Leishmania donovani, this protein is Inactive deoxyhypusine synthase.